A 1066-amino-acid polypeptide reads, in one-letter code: Kinesin-like protein Klp61F (1066 aa).

The Kinesin motor domain occupies 19–356 (NIQVYVRVRP…LEYAHRAKNI (338 aa)). 103–110 (GQTGTGKT) is an ATP binding site. Residues 362–462 (VNQKLTKKTV…KTEENLLNTK (101 aa)) are a coiled coil. A Phosphothreonine modification is found at threonine 520. 4 coiled-coil regions span residues 540-569 (DRMQ…QLSQ), 639-738 (LMSK…QIKN), 808-875 (CSML…LITE), and 889-918 (DLVQ…ELVR). The residue at position 933 (threonine 933) is a Phosphothreonine. Serine 949 is subject to Phosphoserine. Over residues 990-1002 (ELSETETIMNSTP) the composition is skewed to polar residues. Disordered regions lie at residues 990–1009 (ELSE…VDGV) and 1016–1066 (GTTR…ENVA). Positions 1033–1051 (GGKRSSSLSRSLTPSKTSP) are enriched in low complexity. At serine 1043 the chain carries Phosphoserine. A Phosphothreonine modification is found at threonine 1045. A phosphoserine mark is found at serine 1050 and serine 1054.

Belongs to the TRAFAC class myosin-kinesin ATPase superfamily. Kinesin family. BimC subfamily. Homotetramer. Consists of two pairs of polypeptides associated by coiled-coil interactions to form two homodimers. The homodimers are linked by lateral interactions between their coiled-coil regions to form a bipolar homotetramer consisting of a central rod with two motor domains projecting from either end. Parallel coiled coils extend from each pair of motor heads, switch to two antiparallel coiled coils in the central region and then back to parallel coiled coils. Interacts with Wee1. Post-translationally, phosphorylation is required for localization to mitotic spindles. Phosphorylation of Thr-933 during mitosis controls association with the spindle apparatus. Phosphorylated in vitro by Wee1.

It localises to the cytoplasm. Its subcellular location is the cytoskeleton. The protein resides in the spindle. It is found in the spindle pole. Its function is as follows. Important role in mitotic dividing cells. Microtubule motor required for spindle body separation. Slow plus-end directed microtubule motor capable of cross-linking and sliding apart antiparallel microtubules, thereby pushing apart the associated spindle poles during spindle assembly and function. Forms cross-links between microtubules within interpolar microtubule bundles. Contributes to the length of the metaphase spindle, maintains the prometaphase spindle by antagonizing Ncd, drives anaphase B, and also contributes to normal chromosome congression, kinetochore spacing, and anaphase A rates. Displays microtubule-stimulated ATPase activity. Required for normal fusome organization. Required in non-mitotic cells for transport of secretory proteins from the Golgi complex to the cell surface. This is Kinesin-like protein Klp61F from Drosophila melanogaster (Fruit fly).